The primary structure comprises 353 residues: MIEADRLIAATHSPREREEVQDRAIRPVSLAEYIGQPTVREQMELFIQAARGRSESLDHTLIFGPPGLGKTTLANIIAQEMGVSIKSTSGPVLERPGDLAALLTNLEPHDVLFIDEIHRLSPIVEEVLYPAMEDFQLDIMIGEGPAARSIKLDLPPFTLVGATTRAGMLTNPLRDRFGIVQRLEFYSTADLATIVSRSANILGLPLDPEGSFEIARRARGTPRIANRLLRRVRDFAEVRAKGHITKSVADLALNLLDVDEHGFDHQDRRLLLTMIEKFDGGPVGIDSLAAAISEERHTIEDVLEPYLIQQGYIMRTPRGRVVTRHAYLHFGLNIPTRMGEMPVVDEFLDAVDD.

Residues 4-186 (ADRLIAATHS…FGIVQRLEFY (183 aa)) are large ATPase domain (RuvB-L). ATP contacts are provided by residues I25, R26, G67, K70, T71, T72, 133 to 135 (EDF), R176, Y186, and R223. T71 is a binding site for Mg(2+). A small ATPAse domain (RuvB-S) region spans residues 187–257 (STADLATIVS…VADLALNLLD (71 aa)). The segment at 260 to 353 (EHGFDHQDRR…VDEFLDAVDD (94 aa)) is head domain (RuvB-H). Positions 296, 315, and 320 each coordinate DNA.

It belongs to the RuvB family. As to quaternary structure, homohexamer. Forms an RuvA(8)-RuvB(12)-Holliday junction (HJ) complex. HJ DNA is sandwiched between 2 RuvA tetramers; dsDNA enters through RuvA and exits via RuvB. An RuvB hexamer assembles on each DNA strand where it exits the tetramer. Each RuvB hexamer is contacted by two RuvA subunits (via domain III) on 2 adjacent RuvB subunits; this complex drives branch migration. In the full resolvosome a probable DNA-RuvA(4)-RuvB(12)-RuvC(2) complex forms which resolves the HJ.

The protein resides in the cytoplasm. It catalyses the reaction ATP + H2O = ADP + phosphate + H(+). The RuvA-RuvB-RuvC complex processes Holliday junction (HJ) DNA during genetic recombination and DNA repair, while the RuvA-RuvB complex plays an important role in the rescue of blocked DNA replication forks via replication fork reversal (RFR). RuvA specifically binds to HJ cruciform DNA, conferring on it an open structure. The RuvB hexamer acts as an ATP-dependent pump, pulling dsDNA into and through the RuvAB complex. RuvB forms 2 homohexamers on either side of HJ DNA bound by 1 or 2 RuvA tetramers; 4 subunits per hexamer contact DNA at a time. Coordinated motions by a converter formed by DNA-disengaged RuvB subunits stimulates ATP hydrolysis and nucleotide exchange. Immobilization of the converter enables RuvB to convert the ATP-contained energy into a lever motion, pulling 2 nucleotides of DNA out of the RuvA tetramer per ATP hydrolyzed, thus driving DNA branch migration. The RuvB motors rotate together with the DNA substrate, which together with the progressing nucleotide cycle form the mechanistic basis for DNA recombination by continuous HJ branch migration. Branch migration allows RuvC to scan DNA until it finds its consensus sequence, where it cleaves and resolves cruciform DNA. This chain is Holliday junction branch migration complex subunit RuvB, found in Pseudomonas fluorescens (strain Pf0-1).